We begin with the raw amino-acid sequence, 702 residues long: Polyphosphate kinase (702 aa).

Asparagine 55 is a binding site for ATP. Arginine 389 and arginine 419 together coordinate Mg(2+). Histidine 449 acts as the Phosphohistidine intermediate in catalysis. The ATP site is built by tyrosine 482, arginine 578, and histidine 606.

This sequence belongs to the polyphosphate kinase 1 (PPK1) family. Requires Mg(2+) as cofactor. Post-translationally, an intermediate of this reaction is the autophosphorylated ppk in which a phosphate is covalently linked to a histidine residue through a N-P bond.

It carries out the reaction [phosphate](n) + ATP = [phosphate](n+1) + ADP. Its function is as follows. Catalyzes the reversible transfer of the terminal phosphate of ATP to form a long-chain polyphosphate (polyP). In Bacillus anthracis, this protein is Polyphosphate kinase.